Reading from the N-terminus, the 634-residue chain is 1-phosphatidylinositol 4,5-bisphosphate phosphodiesterase zeta-1 (634 aa).

An EF-hand domain is found at 35–70 (CNTIHVKYIFKDNDRLKQGRITIEEFRTIYRIITYR). The 145-residue stretch at 155–299 (QDMTHPLTDY…LKFKILVRNK (145 aa)) folds into the PI-PLC X-box domain. Residues H170 and H215 contribute to the active site. Residues 312-345 (GSDMHGKVEEFEEEEEIEQEEDGSGAKEPEPVGD) are disordered. Residues 321 to 334 (EFEEEEEIEQEEDG) are compositionally biased toward acidic residues. The 117-residue stretch at 376–492 (LSDLVIYTKV…GYVLKPRFLR (117 aa)) folds into the PI-PLC Y-box domain. Positions 492–615 (RDKKTKFNPH…RGYRRVPLFS (124 aa)) constitute a C2 domain.

In terms of assembly, interacts (via its C2 domain) with PtdIns(3)P and, to a lesser extent, PtdIns(5)P in vitro. Ca(2+) serves as cofactor.

The protein localises to the nucleus. The protein resides in the cytoplasm. Its subcellular location is the perinuclear region. It catalyses the reaction a 1,2-diacyl-sn-glycero-3-phospho-(1D-myo-inositol-4,5-bisphosphate) + H2O = 1D-myo-inositol 1,4,5-trisphosphate + a 1,2-diacyl-sn-glycerol + H(+). Functionally, the production of the second messenger molecules diacylglycerol (DAG) and inositol 1,4,5-trisphosphate (IP3) is mediated by activated phosphatidylinositol-specific phospholipase C enzymes. In vitro, hydrolyzes PtdIns(4,5)P2 in a Ca(2+)-dependent manner. Triggers intracellular Ca(2+) oscillations in oocytes solely during M phase and is involved in inducing oocyte activation and initiating embryonic development up to the blastocyst stage. Is therefore a strong candidate for the egg-activating soluble sperm factor that is transferred from the sperm into the egg cytoplasm following gamete membrane fusion. May exert an inhibitory effect on phospholipase-C-coupled processes that depend on calcium ions and protein kinase C, including CFTR trafficking and function. The protein is 1-phosphatidylinositol 4,5-bisphosphate phosphodiesterase zeta-1 of Bos taurus (Bovine).